Reading from the N-terminus, the 121-residue chain is uncharacterized protein (121 aa).

A helical membrane pass occupies residues 6 to 26 (ITTASILLVVIVAFCAAAPMI).

It localises to the membrane. This is an uncharacterized protein from Caenorhabditis elegans.